A 297-amino-acid polypeptide reads, in one-letter code: Protease HtpX homolog (297 aa).

The next 2 membrane-spanning stretches (helical) occupy residues 14–34 (IFLI…AGYL) and 39–59 (YQFG…SMIF). Zn(2+) is bound at residue His143. Residue Glu144 is part of the active site. His147 provides a ligand contact to Zn(2+). A run of 2 helical transmembrane segments spans residues 153–173 (IRIS…ASMG) and 196–216 (IVFL…ASMV). Glu225 is a binding site for Zn(2+).

The protein belongs to the peptidase M48B family. Zn(2+) is required as a cofactor.

It is found in the cell membrane. In Streptococcus uberis (strain ATCC BAA-854 / 0140J), this protein is Protease HtpX homolog.